A 183-amino-acid chain; its full sequence is Ribonuclease H (183 aa).

Residues 2–151 form the RNase H type-1 domain; it reads SQARFIAFSD…VDQLAQAAAR (150 aa). Positions 11, 57, 79, and 143 each coordinate Mg(2+).

Belongs to the RNase H family. As to quaternary structure, monomer. It depends on Mg(2+) as a cofactor.

It is found in the cytoplasm. The catalysed reaction is Endonucleolytic cleavage to 5'-phosphomonoester.. Endonuclease that specifically degrades the RNA of RNA-DNA hybrids. In Anaeromyxobacter sp. (strain K), this protein is Ribonuclease H.